A 214-amino-acid polypeptide reads, in one-letter code: Pyridoxine/pyridoxamine 5'-phosphate oxidase (214 aa).

Residues 10–13 (RLNY) and Lys-68 contribute to the substrate site. FMN is bound by residues 63-68 (RMVLLK), 78-79 (YT), Lys-85, and Gln-107. 3 residues coordinate substrate: Tyr-125, Arg-129, and Ser-133. FMN-binding positions include 142-143 (QS) and Trp-187. Residue 193–195 (RLH) coordinates substrate. Arg-197 serves as a coordination point for FMN.

The protein belongs to the pyridoxamine 5'-phosphate oxidase family. In terms of assembly, homodimer. The cofactor is FMN.

The catalysed reaction is pyridoxamine 5'-phosphate + O2 + H2O = pyridoxal 5'-phosphate + H2O2 + NH4(+). It carries out the reaction pyridoxine 5'-phosphate + O2 = pyridoxal 5'-phosphate + H2O2. It participates in cofactor metabolism; pyridoxal 5'-phosphate salvage; pyridoxal 5'-phosphate from pyridoxamine 5'-phosphate: step 1/1. It functions in the pathway cofactor metabolism; pyridoxal 5'-phosphate salvage; pyridoxal 5'-phosphate from pyridoxine 5'-phosphate: step 1/1. In terms of biological role, catalyzes the oxidation of either pyridoxine 5'-phosphate (PNP) or pyridoxamine 5'-phosphate (PMP) into pyridoxal 5'-phosphate (PLP). The protein is Pyridoxine/pyridoxamine 5'-phosphate oxidase of Synechocystis sp. (strain ATCC 27184 / PCC 6803 / Kazusa).